A 514-amino-acid polypeptide reads, in one-letter code: 2,3-bisphosphoglycerate-independent phosphoglycerate mutase (514 aa).

2 residues coordinate Mn(2+): Asp-14 and Ser-64. Catalysis depends on Ser-64, which acts as the Phosphoserine intermediate. Substrate contacts are provided by residues His-125, 155-156 (RD), Arg-187, Arg-193, 263-266 (RADR), and Lys-336. Mn(2+) is bound by residues Asp-403, His-407, Asp-444, His-445, and His-463.

This sequence belongs to the BPG-independent phosphoglycerate mutase family. As to quaternary structure, monomer. The cofactor is Mn(2+).

It catalyses the reaction (2R)-2-phosphoglycerate = (2R)-3-phosphoglycerate. Its pathway is carbohydrate degradation; glycolysis; pyruvate from D-glyceraldehyde 3-phosphate: step 3/5. Functionally, catalyzes the interconversion of 2-phosphoglycerate and 3-phosphoglycerate. The protein is 2,3-bisphosphoglycerate-independent phosphoglycerate mutase of Shewanella putrefaciens (strain CN-32 / ATCC BAA-453).